Consider the following 524-residue polypeptide: Thioredoxin reductase 2, mitochondrial (524 aa).

The N-terminal 36 residues, 1 to 36 (MAAMAVALRGLGGRFRWRTQAVAGGVRGAARGAAAG), are a transit peptide targeting the mitochondrion. 41-70 (DLLVVGGGSGGLACAKEAAQLGRKVAVVDY) is an FAD binding site. A disulfide bond links C86 and C91. Residues K175 and K329 each carry the N6-succinyllysine modification. Residue H497 is the Proton acceptor of the active site. The segment at residues 522–523 (CU) is a cross-link (cysteinyl-selenocysteine (Cys-Sec)). A non-standard amino acid (selenocysteine) is located at residue U523.

This sequence belongs to the class-I pyridine nucleotide-disulfide oxidoreductase family. In terms of assembly, homodimer. It depends on FAD as a cofactor. Highly expressed in the prostate, ovary, liver, testis, uterus, colon and small intestine. Intermediate levels in brain, skeletal muscle, heart and spleen. Low levels in placenta, pancreas, thymus and peripheral blood leukocytes. According to PubMed:10608886, high levels in kidney, whereas according to PubMed:9923614, levels are low. High expression is observed in the adrenal cortex.

It is found in the mitochondrion. The enzyme catalyses [thioredoxin]-dithiol + NADP(+) = [thioredoxin]-disulfide + NADPH + H(+). Functionally, involved in the control of reactive oxygen species levels and the regulation of mitochondrial redox homeostasis. Maintains thioredoxin in a reduced state. May play a role in redox-regulated cell signaling. This Homo sapiens (Human) protein is Thioredoxin reductase 2, mitochondrial.